Reading from the N-terminus, the 731-residue chain is Putative pentatricopeptide repeat-containing protein At1g17630 (731 aa).

PPR repeat units lie at residues 88–118 (SGSL…VSLV), 122–156 (DLRL…GLTG), 157–191 (DGYI…GLKE), 192–222 (NLHV…MPVR), 223–257 (NRMS…EFKP), 258–292 (DEVT…GNAV), 293–327 (SGEA…GFEE), 328–358 (YLPS…IRNK), 359–393 (GIES…NHVC), 398–432 (NVVT…KVLA), 433–467 (NSVT…SMSE), 468–498 (NILV…IRDK), 499–533 (DLIS…GFHP), 534–569 (DGIA…GLEP), and 570–600 (QQEH…MPME). The type E motif stretch occupies residues 605 to 680 (VLGALLNSCR…VSGSSWIEVK (76 aa)). The type E(+) motif stretch occupies residues 681–711 (KKKYKFSSGSIVQSEFETIYPVLEDLVSHML).

It belongs to the PPR family. PCMP-E subfamily.

The protein is Putative pentatricopeptide repeat-containing protein At1g17630 (PCMP-E72) of Arabidopsis thaliana (Mouse-ear cress).